The chain runs to 154 residues: Putative pre-16S rRNA nuclease (154 aa).

Belongs to the YqgF nuclease family.

It localises to the cytoplasm. Its function is as follows. Could be a nuclease involved in processing of the 5'-end of pre-16S rRNA. The sequence is that of Putative pre-16S rRNA nuclease from Pelotomaculum thermopropionicum (strain DSM 13744 / JCM 10971 / SI).